A 105-amino-acid chain; its full sequence is Small ribosomal subunit protein uS17 (105 aa).

The protein belongs to the universal ribosomal protein uS17 family. As to quaternary structure, part of the 30S ribosomal subunit. Contacts protein S12.

One of the primary rRNA binding proteins, it binds directly to 16S rRNA where it helps nucleate assembly of the platform and body of the 30S subunit by bringing together and stabilizing interactions between several different RNA helices. The combined cluster of proteins S8, S12 and S17 appears to hold together the shoulder and platform of the 30S subunit. This Thermus thermophilus (strain ATCC 27634 / DSM 579 / HB8) protein is Small ribosomal subunit protein uS17.